The following is a 231-amino-acid chain: Lipoprotein-releasing system ATP-binding protein LolD (231 aa).

Positions 11–231 (LQAEHLGKVY…HMENGRLQPD (221 aa)) constitute an ABC transporter domain. 47–54 (GASGSGKS) serves as a coordination point for ATP.

This sequence belongs to the ABC transporter superfamily. Lipoprotein translocase (TC 3.A.1.125) family. In terms of assembly, the complex is composed of two ATP-binding proteins (LolD) and two transmembrane proteins (LolC and LolE).

It is found in the cell inner membrane. Functionally, part of the ABC transporter complex LolCDE involved in the translocation of mature outer membrane-directed lipoproteins, from the inner membrane to the periplasmic chaperone, LolA. Responsible for the formation of the LolA-lipoprotein complex in an ATP-dependent manner. The sequence is that of Lipoprotein-releasing system ATP-binding protein LolD from Bordetella bronchiseptica (strain ATCC BAA-588 / NCTC 13252 / RB50) (Alcaligenes bronchisepticus).